Here is a 121-residue protein sequence, read N- to C-terminus: Large ribosomal subunit protein eL34A (121 aa).

This sequence belongs to the eukaryotic ribosomal protein eL34 family. Component of the large ribosomal subunit (LSU). Mature yeast ribosomes consist of a small (40S) and a large (60S) subunit. The 40S small subunit contains 1 molecule of ribosomal RNA (18S rRNA) and 33 different proteins (encoded by 57 genes). The large 60S subunit contains 3 rRNA molecules (25S, 5.8S and 5S rRNA) and 46 different proteins (encoded by 81 genes).

It is found in the cytoplasm. Its function is as follows. Component of the ribosome, a large ribonucleoprotein complex responsible for the synthesis of proteins in the cell. The small ribosomal subunit (SSU) binds messenger RNAs (mRNAs) and translates the encoded message by selecting cognate aminoacyl-transfer RNA (tRNA) molecules. The large subunit (LSU) contains the ribosomal catalytic site termed the peptidyl transferase center (PTC), which catalyzes the formation of peptide bonds, thereby polymerizing the amino acids delivered by tRNAs into a polypeptide chain. The nascent polypeptides leave the ribosome through a tunnel in the LSU and interact with protein factors that function in enzymatic processing, targeting, and the membrane insertion of nascent chains at the exit of the ribosomal tunnel. The protein is Large ribosomal subunit protein eL34A of Saccharomyces cerevisiae (strain ATCC 204508 / S288c) (Baker's yeast).